Reading from the N-terminus, the 206-residue chain is Small ribosomal subunit protein eS8 (206 aa).

Residues 1-37 form a disordered region; that stretch reads MGISRDSRHKRSATGAKRAQFRKKRKFELGRQPANTK.

This sequence belongs to the eukaryotic ribosomal protein eS8 family. Component of the small ribosomal subunit. Mature ribosomes consist of a small (40S) and a large (60S) subunit. The 40S subunit contains about 32 different proteins and 1 molecule of RNA (18S). The 60S subunit contains 45 different proteins and 3 molecules of RNA (25S, 5.8S and 5S).

The protein resides in the cytoplasm. In terms of biological role, component of the ribosome, a large ribonucleoprotein complex responsible for the synthesis of proteins in the cell. The small ribosomal subunit (SSU) binds messenger RNAs (mRNAs) and translates the encoded message by selecting cognate aminoacyl-transfer RNA (tRNA) molecules. The large subunit (LSU) contains the ribosomal catalytic site termed the peptidyl transferase center (PTC), which catalyzes the formation of peptide bonds, thereby polymerizing the amino acids delivered by tRNAs into a polypeptide chain. The nascent polypeptides leave the ribosome through a tunnel in the LSU and interact with protein factors that function in enzymatic processing, targeting, and the membrane insertion of nascent chains at the exit of the ribosomal tunnel. The chain is Small ribosomal subunit protein eS8 (RPS8A) from Candida albicans (strain SC5314 / ATCC MYA-2876) (Yeast).